Reading from the N-terminus, the 667-residue chain is Endogenous retrovirus group K member 5 Gag polyprotein (667 aa).

Gly2 carries the N-myristoyl glycine lipid modification. Positions 166 to 188 are disordered; that stretch reads KGPELVGPSESKPRGPSPLPAGQ. 2 CCHC-type zinc fingers span residues 543–560 and 580–597; these read KKCY…SCPV and GLCP…QCHS. The disordered stretch occupies residues 598–667; it reads KFDKDGQPLS…CPAPQQAAPQ (70 aa). Residues 648-667 are compositionally biased toward polar residues; sequence GVSQLQQSNSCPAPQQAAPQ.

Belongs to the beta type-B retroviral Gag protein family. HERV class-II K(HML-2) gag subfamily. In terms of processing, myristoylation is essential for retroviral assembly. Alteration of the glycine residue leads to a block in the budding of particles and an accumulation of Gag inside the cell. Post-translationally, specific enzymatic cleavages may yield mature proteins.

Its subcellular location is the cell membrane. The products of the Gag polyproteins of infectious retroviruses perform highly complex orchestrated tasks during the assembly, budding, maturation, and infection stages of the viral replication cycle. During viral assembly, the proteins form membrane associations and self-associations that ultimately result in budding of an immature virion from the infected cell. Gag precursors also function during viral assembly to selectively bind and package two plus strands of genomic RNA. Endogenous Gag proteins may have kept, lost or modified their original function during evolution. This chain is Endogenous retrovirus group K member 5 Gag polyprotein (ERVK-5), found in Homo sapiens (Human).